We begin with the raw amino-acid sequence, 681 residues long: DNA ligase (681 aa).

NAD(+) contacts are provided by residues 45-49 (DFDFD), 94-95 (SL), and E120. Catalysis depends on K122, which acts as the N6-AMP-lysine intermediate. Positions 143, 177, 289, and 313 each coordinate NAD(+). C403, C406, C421, and C426 together coordinate Zn(2+). A BRCT domain is found at 593 to 681 (SDQQPFAGQS…SLKINFKNTI (89 aa)).

Belongs to the NAD-dependent DNA ligase family. LigA subfamily. The cofactor is Mg(2+). Mn(2+) is required as a cofactor.

It carries out the reaction NAD(+) + (deoxyribonucleotide)n-3'-hydroxyl + 5'-phospho-(deoxyribonucleotide)m = (deoxyribonucleotide)n+m + AMP + beta-nicotinamide D-nucleotide.. DNA ligase that catalyzes the formation of phosphodiester linkages between 5'-phosphoryl and 3'-hydroxyl groups in double-stranded DNA using NAD as a coenzyme and as the energy source for the reaction. It is essential for DNA replication and repair of damaged DNA. This Leptospira borgpetersenii serovar Hardjo-bovis (strain JB197) protein is DNA ligase.